A 185-amino-acid polypeptide reads, in one-letter code: Ribosome-recycling factor (185 aa).

The protein belongs to the RRF family.

Its subcellular location is the cytoplasm. Its function is as follows. Responsible for the release of ribosomes from messenger RNA at the termination of protein biosynthesis. May increase the efficiency of translation by recycling ribosomes from one round of translation to another. The protein is Ribosome-recycling factor of Sulfurovum sp. (strain NBC37-1).